Consider the following 470-residue polypeptide: Siroheme synthase 2 (470 aa).

The interval 1 to 202 (MDYLPMFAKL…EDWQGAEQWL (202 aa)) is precorrin-2 dehydrogenase /sirohydrochlorin ferrochelatase. Residues 22-23 (EV) and 43-44 (PE) each bind NAD(+). Position 126 is a phosphoserine (serine 126). Positions 214–470 (GEVVLVGAGP…TCDLKLVSLA (257 aa)) are uroporphyrinogen-III C-methyltransferase. Proline 223 provides a ligand contact to S-adenosyl-L-methionine. Catalysis depends on aspartate 246, which acts as the Proton acceptor. The Proton donor role is filled by lysine 268. S-adenosyl-L-methionine contacts are provided by residues 299–301 (GGD), 329–330 (TA), methionine 381, and glycine 410.

This sequence in the N-terminal section; belongs to the precorrin-2 dehydrogenase / sirohydrochlorin ferrochelatase family. It in the C-terminal section; belongs to the precorrin methyltransferase family.

It carries out the reaction uroporphyrinogen III + 2 S-adenosyl-L-methionine = precorrin-2 + 2 S-adenosyl-L-homocysteine + H(+). The enzyme catalyses precorrin-2 + NAD(+) = sirohydrochlorin + NADH + 2 H(+). The catalysed reaction is siroheme + 2 H(+) = sirohydrochlorin + Fe(2+). It functions in the pathway cofactor biosynthesis; adenosylcobalamin biosynthesis; precorrin-2 from uroporphyrinogen III: step 1/1. The protein operates within cofactor biosynthesis; adenosylcobalamin biosynthesis; sirohydrochlorin from precorrin-2: step 1/1. Its pathway is porphyrin-containing compound metabolism; siroheme biosynthesis; precorrin-2 from uroporphyrinogen III: step 1/1. It participates in porphyrin-containing compound metabolism; siroheme biosynthesis; siroheme from sirohydrochlorin: step 1/1. It functions in the pathway porphyrin-containing compound metabolism; siroheme biosynthesis; sirohydrochlorin from precorrin-2: step 1/1. Its function is as follows. Multifunctional enzyme that catalyzes the SAM-dependent methylations of uroporphyrinogen III at position C-2 and C-7 to form precorrin-2 via precorrin-1. Then it catalyzes the NAD-dependent ring dehydrogenation of precorrin-2 to yield sirohydrochlorin. Finally, it catalyzes the ferrochelation of sirohydrochlorin to yield siroheme. The sequence is that of Siroheme synthase 2 from Aeromonas hydrophila subsp. hydrophila (strain ATCC 7966 / DSM 30187 / BCRC 13018 / CCUG 14551 / JCM 1027 / KCTC 2358 / NCIMB 9240 / NCTC 8049).